We begin with the raw amino-acid sequence, 382 residues long: ATP phosphoribosyltransferase regulatory subunit (382 aa).

It belongs to the class-II aminoacyl-tRNA synthetase family. HisZ subfamily. Heteromultimer composed of HisG and HisZ subunits.

Its subcellular location is the cytoplasm. It functions in the pathway amino-acid biosynthesis; L-histidine biosynthesis; L-histidine from 5-phospho-alpha-D-ribose 1-diphosphate: step 1/9. Functionally, required for the first step of histidine biosynthesis. May allow the feedback regulation of ATP phosphoribosyltransferase activity by histidine. The protein is ATP phosphoribosyltransferase regulatory subunit of Burkholderia cenocepacia (strain HI2424).